A 505-amino-acid chain; its full sequence is Putative heat shock protein HSP 90-beta 4 (505 aa).

3 residues coordinate ATP: Asn22, Lys83, and Phe109. The interval 197–248 (EKEISDDEEEKGEKEEEDKDDKEKPKTEDVGSDEEDDTDKNNKKKTKKIKEK) is disordered. Residues 200–216 (ISDDEEEKGEKEEEDKD) are compositionally biased toward acidic residues.

The protein belongs to the heat shock protein 90 family. As to quaternary structure, homodimer.

The protein resides in the cytoplasm. In terms of biological role, putative molecular chaperone that may promote the maturation, structural maintenance and proper regulation of specific target proteins. This is Putative heat shock protein HSP 90-beta 4 (HSP90AB4P) from Homo sapiens (Human).